The sequence spans 273 residues: 3-methyl-2-oxobutanoate hydroxymethyltransferase (273 aa).

Positions 49 and 88 each coordinate Mg(2+). Residues 49-50, D88, and K118 each bind 3-methyl-2-oxobutanoate; that span reads DS. E120 lines the Mg(2+) pocket. The active-site Proton acceptor is E187.

It belongs to the PanB family. Homodecamer; pentamer of dimers. Mg(2+) serves as cofactor.

Its subcellular location is the cytoplasm. The catalysed reaction is 3-methyl-2-oxobutanoate + (6R)-5,10-methylene-5,6,7,8-tetrahydrofolate + H2O = 2-dehydropantoate + (6S)-5,6,7,8-tetrahydrofolate. It functions in the pathway cofactor biosynthesis; (R)-pantothenate biosynthesis; (R)-pantoate from 3-methyl-2-oxobutanoate: step 1/2. Its function is as follows. Catalyzes the reversible reaction in which hydroxymethyl group from 5,10-methylenetetrahydrofolate is transferred onto alpha-ketoisovalerate to form ketopantoate. In Rhizobium etli (strain ATCC 51251 / DSM 11541 / JCM 21823 / NBRC 15573 / CFN 42), this protein is 3-methyl-2-oxobutanoate hydroxymethyltransferase.